Here is a 631-residue protein sequence, read N- to C-terminus: Phosphomethylpyrimidine synthase (631 aa).

Residues 54 to 80 form a disordered region; that stretch reads TLVGGDKDKPRYETNEPIPVYDTSGPY. The segment covering 58 to 67 has biased composition (basic and acidic residues); sequence GDKDKPRYET. Residues Asn-239, Met-268, Tyr-297, His-333, 353–355, 394–397, and Glu-433 contribute to the substrate site; these read SRG and DGLR. Residue His-437 participates in Zn(2+) binding. Tyr-460 lines the substrate pocket. Zn(2+) is bound at residue His-501. The [4Fe-4S] cluster site is built by Cys-581, Cys-584, and Cys-589.

The protein belongs to the ThiC family. Homodimer. The cofactor is [4Fe-4S] cluster.

It catalyses the reaction 5-amino-1-(5-phospho-beta-D-ribosyl)imidazole + S-adenosyl-L-methionine = 4-amino-2-methyl-5-(phosphooxymethyl)pyrimidine + CO + 5'-deoxyadenosine + formate + L-methionine + 3 H(+). It participates in cofactor biosynthesis; thiamine diphosphate biosynthesis. Its function is as follows. Catalyzes the synthesis of the hydroxymethylpyrimidine phosphate (HMP-P) moiety of thiamine from aminoimidazole ribotide (AIR) in a radical S-adenosyl-L-methionine (SAM)-dependent reaction. The sequence is that of Phosphomethylpyrimidine synthase from Klebsiella pneumoniae subsp. pneumoniae (strain ATCC 700721 / MGH 78578).